A 146-amino-acid polypeptide reads, in one-letter code: Phospholipase A2, membrane associated (146 aa).

The N-terminal stretch at 1–21 is a signal peptide; the sequence is MKVLLLLAVVIMAFGSIQVQG. Intrachain disulfides connect C47/C139, C49/C65, C64/C119, C70/C146, C71/C112, C80/C105, and C98/C110. The Ca(2+) site is built by H48, G50, and G52. Residue H68 is part of the active site. D69 lines the Ca(2+) pocket. D113 is a catalytic residue.

Belongs to the phospholipase A2 family. Ca(2+) is required as a cofactor.

Its subcellular location is the secreted. It is found in the cell membrane. It localises to the mitochondrion outer membrane. It carries out the reaction a 1,2-diacyl-sn-glycero-3-phosphoethanolamine + H2O = a 1-acyl-sn-glycero-3-phosphoethanolamine + a fatty acid + H(+). The catalysed reaction is 1-hexadecanoyl-2-(9Z-octadecenoyl)-sn-glycero-3-phosphoethanolamine + H2O = 1-hexadecanoyl-sn-glycero-3-phosphoethanolamine + (9Z)-octadecenoate + H(+). The enzyme catalyses 1-hexadecanoyl-2-(9Z,12Z-octadecadienoyl)-sn-glycero-3-phosphoethanolamine + H2O = 1-hexadecanoyl-sn-glycero-3-phosphoethanolamine + (9Z,12Z)-octadecadienoate + H(+). It catalyses the reaction 1-hexadecanoyl-2-(5Z,8Z,11Z,14Z-eicosatetraenoyl)-sn-glycero-3-phosphoethanolamine + H2O = 1-hexadecanoyl-sn-glycero-3-phosphoethanolamine + (5Z,8Z,11Z,14Z)-eicosatetraenoate + H(+). It carries out the reaction N-hexadecanoyl-1,2-di-(9Z-octadecenoyl)-sn-glycero-3-phosphoethanolamine + H2O = N-hexadecanoyl-1-(9Z-octadecenoyl)-sn-glycero-3-phosphoethanolamine + (9Z)-octadecenoate + H(+). The catalysed reaction is 1,2-dihexadecanoyl-sn-glycero-3-phospho-(1'-sn-glycerol) + H2O = 1-hexadecanoyl-sn-glycero-3-phospho-(1'-sn-glycerol) + hexadecanoate + H(+). The enzyme catalyses 1-hexadecanoyl-2-(9Z-octadecenoyl)-sn-glycero-3-phosphoglycerol + H2O = 1-hexadecanoyl-sn-glycero-3-phosphoglycerol + (9Z)-octadecenoate + H(+). It catalyses the reaction 1-hexadecanoyl-2-(9Z-octadecenoyl)-sn-glycero-3-phospho-(1'-sn-glycerol) + H2O = 1-hexadecanoyl-sn-glycero-3-phospho-(1'-sn-glycerol) + (9Z)-octadecenoate + H(+). It carries out the reaction a 1,2-diacyl-sn-glycero-3-phosphocholine + H2O = a 1-acyl-sn-glycero-3-phosphocholine + a fatty acid + H(+). The catalysed reaction is 1,2-dihexadecanoyl-sn-glycero-3-phosphocholine + H2O = 1-hexadecanoyl-sn-glycero-3-phosphocholine + hexadecanoate + H(+). The enzyme catalyses 1-hexadecanoyl-2-(9Z-octadecenoyl)-sn-glycero-3-phosphocholine + H2O = 1-hexadecanoyl-sn-glycero-3-phosphocholine + (9Z)-octadecenoate + H(+). It catalyses the reaction 1-hexadecanoyl-2-(9Z,12Z-octadecadienoyl)-sn-glycero-3-phosphocholine + H2O = (9Z,12Z)-octadecadienoate + 1-hexadecanoyl-sn-glycero-3-phosphocholine + H(+). It carries out the reaction 1-hexadecanoyl-2-(4Z,7Z,10Z,13Z,16Z,19Z-docosahexaenoyl)-sn-glycero-3-phosphocholine + H2O = (4Z,7Z,10Z,13Z,16Z,19Z)-docosahexaenoate + 1-hexadecanoyl-sn-glycero-3-phosphocholine + H(+). Its function is as follows. Secretory calcium-dependent phospholipase A2 that primarily targets extracellular phospholipids with implications in host antimicrobial defense, inflammatory response and tissue regeneration. Hydrolyzes the ester bond of the fatty acyl group attached at sn-2 position of phospholipids (phospholipase A2 activity) with preference for phosphatidylethanolamines and phosphatidylglycerols over phosphatidylcholines. Contributes to lipid remodeling of cellular membranes and generation of lipid mediators involved in pathogen clearance. Displays bactericidal activity against Gram-positive bacteria by directly hydrolyzing phospholipids of the bacterial membrane. Upon sterile inflammation, targets membrane phospholipids of extracellular mitochondria released from activated platelets, generating free unsaturated fatty acids such as arachidonate that is used by neighboring leukocytes to synthesize inflammatory eicosanoids such as leukotrienes. Simultaneously, by compromising mitochondrial membrane integrity, promotes the release in circulation of potent damage-associated molecular pattern molecules that activate the innate immune response. Plays a stem cell regulator role in the intestinal crypt. Within intracellular compartment mediates Paneth cell differentiation and its stem cell supporting functions by inhibiting Wnt signaling pathway in intestinal stem cell (ICS). Secreted in the intestinal lumen upon inflammation, acts in an autocrine way and promotes prostaglandin E2 synthesis that stimulates Wnt signaling pathway in ICS cells and tissue regeneration. May play a role in the biosynthesis of N-acyl ethanolamines that regulate energy metabolism and inflammation. Hydrolyzes N-acyl phosphatidylethanolamines to N-acyl lysophosphatidylethanolamines, which are further cleaved by a lysophospholipase D to release N-acyl ethanolamines. Independent of its catalytic activity, acts as a ligand for integrins. Binds to and activates integrins ITGAV:ITGB3, ITGA4:ITGB1 and ITGA5:ITGB1. Binds to a site (site 2) which is distinct from the classical ligand-binding site (site 1) and induces integrin conformational changes and enhanced ligand binding to site 1. Induces cell proliferation in an integrin-dependent manner. In Rattus norvegicus (Rat), this protein is Phospholipase A2, membrane associated (Pla2g2a).